The following is a 105-amino-acid chain: UPF0145 protein LPC_0273 (105 aa).

Belongs to the UPF0145 family.

The sequence is that of UPF0145 protein LPC_0273 from Legionella pneumophila (strain Corby).